A 339-amino-acid polypeptide reads, in one-letter code: MTVREPLRPVLYDDARDLVRLLDQKALPAEERWLELSTAEAVAAAIQDLTVRGAPAIGVAAAYALAVEARRGAGPERLRAAADLLARARPTAVNLAWAVRRMSARIGAPASDVLAEAHAIRDEDEAACRRIGALGAPLVPARARVLTHCNAGALATAGYGTALGVVRAAVEAGNAISVFADETRPFLQGARLTAWELHRDGIPVTVLTDGMAGWLMARGEIGCVVVGADRIAANGDVANKIGTYALAVLAAHHRLPFYVAAPWSTVDLATPTGADIPIEERASDEVVVLAGQRIAPAGVPARYPAFDVTPAALVTAIVTERGVVRAPHAAGLAALATAR.

Substrate contacts are provided by residues 52–54 (RGA), R89, and Q188. D229 functions as the Proton donor in the catalytic mechanism. 239–240 (NK) contributes to the substrate binding site.

It belongs to the eIF-2B alpha/beta/delta subunits family. MtnA subfamily.

The enzyme catalyses 5-(methylsulfanyl)-alpha-D-ribose 1-phosphate = 5-(methylsulfanyl)-D-ribulose 1-phosphate. It participates in amino-acid biosynthesis; L-methionine biosynthesis via salvage pathway; L-methionine from S-methyl-5-thio-alpha-D-ribose 1-phosphate: step 1/6. In terms of biological role, catalyzes the interconversion of methylthioribose-1-phosphate (MTR-1-P) into methylthioribulose-1-phosphate (MTRu-1-P). This Anaeromyxobacter dehalogenans (strain 2CP-C) protein is Methylthioribose-1-phosphate isomerase.